The sequence spans 208 residues: MPPKKDVPVKKPAGPSISKPAAKPAAAGAPPAKTKAEPAVPQAPQKTQEPPVDLSKVVIEFNKDQLEEFKEAFELFDRVGDGKILYSQCGDVMRALGQNPTNAEVLKVLGNPKSDELKSRRVDFETFLPMLQAVAKNRGQGTYEDYLEGFRVFDKEGNGKVMGAELRHVLTTLGEKMTEEEVETVLAGHEDSNGCINYEAFLKHILSV.

A disordered region spans residues 1 to 51; sequence MPPKKDVPVKKPAGPSISKPAAKPAAAGAPPAKTKAEPAVPQAPQKTQEPP. Low complexity predominate over residues 10-40; it reads KKPAGPSISKPAAKPAAAGAPPAKTKAEPAV. EF-hand domains follow at residues 64–99, 141–176, and 176–208; these read DQLE…LGQN, GTYE…LGEK, and KMTE…ILSV.

In terms of assembly, myosin is a hexamer of 2 heavy chains and 4 light chains.

Its function is as follows. Regulatory light chain of myosin. Does not bind calcium. This chain is Myosin light chain 6B (MYL6B), found in Homo sapiens (Human).